The chain runs to 260 residues: Protein phosphatase 1 regulatory subunit 35 (260 aa).

Positions 1-100 (MMGFGASALE…PLLVAGAPGD (100 aa)) are disordered. Phosphoserine occurs at positions 46 and 53. Basic residues predominate over residues 64–76 (RKGRRGGSRRGRQ).

This sequence belongs to the PPP1R35 family. In terms of assembly, interacts with PPP1CA; this interaction mediates the PPP1CA phosphatase activity inhibition. Interacts with RTTN; this interaction allows the mutual recruitment to the centriole.

Its subcellular location is the cytoplasm. It localises to the cytoskeleton. The protein resides in the microtubule organizing center. The protein localises to the centrosome. It is found in the centriole. In terms of biological role, during centriole duplication, plays a role in the centriole elongation by promoting the recruitment of the microtubule-binding elongation machinery through its interaction with TTTN, leading to the centriole to centrosome conversion. In addition may play a role in the primary cilia assembly. In Mus musculus (Mouse), this protein is Protein phosphatase 1 regulatory subunit 35.